The chain runs to 143 residues: uncharacterized protein (143 aa).

It localises to the mitochondrion. This is an uncharacterized protein from Arabidopsis thaliana (Mouse-ear cress).